We begin with the raw amino-acid sequence, 89 residues long: Otospiralin (89 aa).

Positions 1–21 are cleaved as a signal peptide; it reads MQACMVPGLALCLLLGPLAGA.

This sequence belongs to the otospiralin family. As to expression, ear specific.

Its subcellular location is the secreted. In terms of biological role, may be essential for the survival of the neurosensory epithelium of the inner ear. In Homo sapiens (Human), this protein is Otospiralin (OTOS).